Reading from the N-terminus, the 145-residue chain is Large ribosomal subunit protein uL15 (145 aa).

Composition is skewed to basic residues over residues 1–13 (MIRKTKKIRKQRG) and 22–33 (TKKRRGAGHRGG). The segment at 1-41 (MIRKTKKIRKQRGSRSVGGGCTKKRRGAGHRGGRGQAGGNK) is disordered.

The protein belongs to the universal ribosomal protein uL15 family. In terms of assembly, part of the 50S ribosomal subunit.

Functionally, binds to the 23S rRNA. The polypeptide is Large ribosomal subunit protein uL15 (Methanosphaera stadtmanae (strain ATCC 43021 / DSM 3091 / JCM 11832 / MCB-3)).